Consider the following 78-residue polypeptide: Exodeoxyribonuclease 7 small subunit (78 aa).

It belongs to the XseB family. In terms of assembly, heterooligomer composed of large and small subunits.

Its subcellular location is the cytoplasm. The catalysed reaction is Exonucleolytic cleavage in either 5'- to 3'- or 3'- to 5'-direction to yield nucleoside 5'-phosphates.. Bidirectionally degrades single-stranded DNA into large acid-insoluble oligonucleotides, which are then degraded further into small acid-soluble oligonucleotides. This Finegoldia magna (strain ATCC 29328 / DSM 20472 / WAL 2508) (Peptostreptococcus magnus) protein is Exodeoxyribonuclease 7 small subunit.